Here is a 326-residue protein sequence, read N- to C-terminus: MRNGTSLLLLAAIALAGAACLTAMGGTAKAAALEPTDSGAPSAIVMFPVGEKPNPKGAAMKPVVFNHLIHEKKIDNCETCHHTGDPVSCSTCHTVEGKAEGNYITLDRAMHATNIAKRAKGNTPVSCVSCHEQQTKERRECAGCHAIVTPKRDEAWCATCHNITPSMTPEQMQKGINGTLLPGDNEALAAETVLAQKTVEPVSPMLAPYKVVIDALADKYEPSNFTHRRHLTSLMERIKDDKLAQAFHNKPEILCATCHHRSPLSLTPPKCGSCHTKEIDKANPGRPNLMAAYHLQCMGCHKGMDVARPRDTDCTTCHKAAPKSAD.

The N-terminal stretch at 1–30 is a signal peptide; that stretch reads MRNGTSLLLLAAIALAGAACLTAMGGTAKA. Heme contacts are provided by His67, His70, Cys77, Cys80, His81, His82, Cys89, Cys92, His93, His111, Cys127, Cys130, His131, Cys141, Cys144, His145, Cys157, Cys160, His161, His227, His230, His248, Cys255, Cys258, His259, His260, Cys271, Cys274, His275, His294, Cys297, Cys300, His301, Cys314, Cys317, and His318.

Monomer. In terms of processing, binds 9 heme groups per subunit.

Its subcellular location is the periplasm. Its function is as follows. May form part of a transmembrane redox complex through which electrons are transferred to the cytoplasm for reduction of sulfate. The sequence is that of Nine-heme cytochrome c from Desulfovibrio desulfuricans (strain ATCC 27774 / DSM 6949 / MB).